Consider the following 184-residue polypeptide: ATP synthase subunit delta (184 aa).

It belongs to the ATPase delta chain family. In terms of assembly, F-type ATPases have 2 components, F(1) - the catalytic core - and F(0) - the membrane proton channel. F(1) has five subunits: alpha(3), beta(3), gamma(1), delta(1), epsilon(1). F(0) has three main subunits: a(1), b(2) and c(10-14). The alpha and beta chains form an alternating ring which encloses part of the gamma chain. F(1) is attached to F(0) by a central stalk formed by the gamma and epsilon chains, while a peripheral stalk is formed by the delta and b chains.

The protein resides in the cell inner membrane. Functionally, f(1)F(0) ATP synthase produces ATP from ADP in the presence of a proton or sodium gradient. F-type ATPases consist of two structural domains, F(1) containing the extramembraneous catalytic core and F(0) containing the membrane proton channel, linked together by a central stalk and a peripheral stalk. During catalysis, ATP synthesis in the catalytic domain of F(1) is coupled via a rotary mechanism of the central stalk subunits to proton translocation. In terms of biological role, this protein is part of the stalk that links CF(0) to CF(1). It either transmits conformational changes from CF(0) to CF(1) or is implicated in proton conduction. This chain is ATP synthase subunit delta, found in Rhizorhabdus wittichii (strain DSM 6014 / CCUG 31198 / JCM 15750 / NBRC 105917 / EY 4224 / RW1) (Sphingomonas wittichii).